The sequence spans 156 residues: Small ribosomal subunit protein uS7 (156 aa).

The protein belongs to the universal ribosomal protein uS7 family. As to quaternary structure, part of the 30S ribosomal subunit. Contacts proteins S9 and S11.

In terms of biological role, one of the primary rRNA binding proteins, it binds directly to 16S rRNA where it nucleates assembly of the head domain of the 30S subunit. Is located at the subunit interface close to the decoding center, probably blocks exit of the E-site tRNA. The sequence is that of Small ribosomal subunit protein uS7 from Oceanobacillus iheyensis (strain DSM 14371 / CIP 107618 / JCM 11309 / KCTC 3954 / HTE831).